The following is a 396-amino-acid chain: Tryptophan synthase beta chain (396 aa).

Lysine 86 bears the N6-(pyridoxal phosphate)lysine mark.

This sequence belongs to the TrpB family. Tetramer of two alpha and two beta chains. It depends on pyridoxal 5'-phosphate as a cofactor.

It catalyses the reaction (1S,2R)-1-C-(indol-3-yl)glycerol 3-phosphate + L-serine = D-glyceraldehyde 3-phosphate + L-tryptophan + H2O. It participates in amino-acid biosynthesis; L-tryptophan biosynthesis; L-tryptophan from chorismate: step 5/5. Its function is as follows. The beta subunit is responsible for the synthesis of L-tryptophan from indole and L-serine. This Francisella tularensis subsp. holarctica (strain FTNF002-00 / FTA) protein is Tryptophan synthase beta chain.